Consider the following 100-residue polypeptide: Aspartyl/glutamyl-tRNA(Asn/Gln) amidotransferase subunit C (100 aa).

Belongs to the GatC family. In terms of assembly, heterotrimer of A, B and C subunits.

It catalyses the reaction L-glutamyl-tRNA(Gln) + L-glutamine + ATP + H2O = L-glutaminyl-tRNA(Gln) + L-glutamate + ADP + phosphate + H(+). The enzyme catalyses L-aspartyl-tRNA(Asn) + L-glutamine + ATP + H2O = L-asparaginyl-tRNA(Asn) + L-glutamate + ADP + phosphate + 2 H(+). Its function is as follows. Allows the formation of correctly charged Asn-tRNA(Asn) or Gln-tRNA(Gln) through the transamidation of misacylated Asp-tRNA(Asn) or Glu-tRNA(Gln) in organisms which lack either or both of asparaginyl-tRNA or glutaminyl-tRNA synthetases. The reaction takes place in the presence of glutamine and ATP through an activated phospho-Asp-tRNA(Asn) or phospho-Glu-tRNA(Gln). The chain is Aspartyl/glutamyl-tRNA(Asn/Gln) amidotransferase subunit C from Streptococcus suis (strain 98HAH33).